We begin with the raw amino-acid sequence, 323 residues long: MRIGQYQLKNCLIAAPMAGVTDRPFRSLCYDMGAGMTVSEMLSSNPQVWQTDKSRLRMVHSDELGIRSVQIAGSDPVDMAAAAKINADSGAQIIDINMGCPAKKVNKKLAGSALLRHPDLVAEILSAVVNAVDVPVTLKIRTGWSPDERNCVEIAKLAERCGIQALTIHGRTRECLFKGEAEYDSIRTVKQNVSIPIIANGDITDPLKARAVLDYTGADALMIGRAAQGRPWIFREIQHYLDTGELLPPLPIAEVQQIMQKHVRELHDFYGQGKGTRIARKHVSWYLKEHAPDDQFRRSFNAIEDASEQLEALEAYFENFLRK.

Residues 16–18 and glutamine 70 each bind FMN; that span reads PMA. Cysteine 100 functions as the Proton donor in the catalytic mechanism. FMN-binding positions include lysine 139, 200 to 202, and 224 to 225; these read NGD and GR.

This sequence belongs to the Dus family. DusB subfamily. The cofactor is FMN.

It carries out the reaction a 5,6-dihydrouridine in tRNA + NAD(+) = a uridine in tRNA + NADH + H(+). It catalyses the reaction a 5,6-dihydrouridine in tRNA + NADP(+) = a uridine in tRNA + NADPH + H(+). Functionally, catalyzes the synthesis of 5,6-dihydrouridine (D), a modified base found in the D-loop of most tRNAs, via the reduction of the C5-C6 double bond in target uridines. This is tRNA-dihydrouridine synthase B from Proteus vulgaris.